A 364-amino-acid polypeptide reads, in one-letter code: tRNA N6-adenosine threonylcarbamoyltransferase (364 aa).

Residues histidine 115 and histidine 119 each contribute to the Fe cation site. Substrate is bound by residues 137–141 (LVSGG), aspartate 170, glycine 183, and asparagine 288. Fe cation is bound at residue aspartate 316.

This sequence belongs to the KAE1 / TsaD family. Fe(2+) is required as a cofactor.

The protein resides in the cytoplasm. The enzyme catalyses L-threonylcarbamoyladenylate + adenosine(37) in tRNA = N(6)-L-threonylcarbamoyladenosine(37) in tRNA + AMP + H(+). In terms of biological role, required for the formation of a threonylcarbamoyl group on adenosine at position 37 (t(6)A37) in tRNAs that read codons beginning with adenine. Is involved in the transfer of the threonylcarbamoyl moiety of threonylcarbamoyl-AMP (TC-AMP) to the N6 group of A37, together with TsaE and TsaB. TsaD likely plays a direct catalytic role in this reaction. The sequence is that of tRNA N6-adenosine threonylcarbamoyltransferase from Bartonella bacilliformis (strain ATCC 35685 / KC583 / Herrer 020/F12,63).